We begin with the raw amino-acid sequence, 278 residues long: Non-homologous end joining protein Ku (278 aa).

In terms of domain architecture, Ku spans 9-172; sequence ISFGLVNIPV…MHFAQELVDV (164 aa). A disordered region spans residues 255-278; sequence NQTGAGAKKKPAKTAKRGKSRKAA. A compositionally biased stretch (basic residues) spans 261–278; sequence AKKKPAKTAKRGKSRKAA.

It belongs to the prokaryotic Ku family. Homodimer. Interacts with LigD.

Its function is as follows. With LigD forms a non-homologous end joining (NHEJ) DNA repair enzyme, which repairs dsDNA breaks with reduced fidelity. Binds linear dsDNA with 5'- and 3'- overhangs but not closed circular dsDNA nor ssDNA. Recruits and stimulates the ligase activity of LigD. The chain is Non-homologous end joining protein Ku from Opitutus terrae (strain DSM 11246 / JCM 15787 / PB90-1).